The sequence spans 145 residues: uncharacterized protein (145 aa).

This is an uncharacterized protein from Sinorhizobium fredii (strain NBRC 101917 / NGR234).